The chain runs to 227 residues: ATP-dependent dethiobiotin synthetase BioD (227 aa).

Residue 13-18 participates in ATP binding; sequence EVGKSV. Residue Ser-17 participates in Mg(2+) binding. The active site involves Lys-38. Ser-42 provides a ligand contact to substrate. Residues Asp-55, 116–119, and 176–177 contribute to the ATP site; these read EGAG and ND. Mg(2+) contacts are provided by Asp-55 and Glu-116.

The protein belongs to the dethiobiotin synthetase family. In terms of assembly, homodimer. Mg(2+) is required as a cofactor.

It localises to the cytoplasm. It catalyses the reaction (7R,8S)-7,8-diammoniononanoate + CO2 + ATP = (4R,5S)-dethiobiotin + ADP + phosphate + 3 H(+). The protein operates within cofactor biosynthesis; biotin biosynthesis; biotin from 7,8-diaminononanoate: step 1/2. Functionally, catalyzes a mechanistically unusual reaction, the ATP-dependent insertion of CO2 between the N7 and N8 nitrogen atoms of 7,8-diaminopelargonic acid (DAPA, also called 7,8-diammoniononanoate) to form a ureido ring. This Serratia marcescens protein is ATP-dependent dethiobiotin synthetase BioD.